The chain runs to 457 residues: uncharacterized protein (457 aa).

A run of 14 helical transmembrane segments spans residues 15-35, 54-74, 87-107, 112-132, 144-164, 166-186, 205-225, 229-249, 269-289, 308-328, 334-354, 357-377, 400-420, and 428-448; these read YGAI…GAIA, IWVV…FSFL, GLVV…LQML, VIQG…IRLI, INSF…AAIL, IASW…ALLL, LPSA…LSGF, QSLT…IFFI, LFSL…LAMV, LLLT…GYLI, GLLG…LVLL, SPAD…FGLF, MLGT…ALML, and THVS…VSGL.

It belongs to the major facilitator superfamily. TCR/Tet family.

It is found in the cell inner membrane. This is an uncharacterized protein from Escherichia coli (strain K12).